The chain runs to 378 residues: MAGRLRVALVAGEASGDILGSGLMQALRARHPEIEFIGVGGPRMEAEGLSSYFPMERLSVMGLVEVLGRLPELLRRRKRLIRTLIDARPDVMIGIDAPDFTLGVEHRLRQAGLRTVHYVSPSVWAWRQKRVLKIREACDLMLALFPFEARFYEEHGVPVRFVGHPLANTIPLQADRVAARERLGLPLDGQVVALMPGSRGGEVGKLGELFLDTAQRLLGERPGLRFVLPCASAARREQIERMLQGREPLPLTLLDGASHEALAACDAVLIASGTATLEALLYKRPMVVAYRVAGLTYRILKRLVKSPYISLPNLLAGRLLVPELIQDAATPRALATTLSPLLDDGSQQVEFFDAIHRALRQDASAQAAEAVLQLVERR.

It belongs to the LpxB family.

It catalyses the reaction a lipid X + a UDP-2-N,3-O-bis[(3R)-3-hydroxyacyl]-alpha-D-glucosamine = a lipid A disaccharide + UDP + H(+). The protein operates within bacterial outer membrane biogenesis; LPS lipid A biosynthesis. Its function is as follows. Condensation of UDP-2,3-diacylglucosamine and 2,3-diacylglucosamine-1-phosphate to form lipid A disaccharide, a precursor of lipid A, a phosphorylated glycolipid that anchors the lipopolysaccharide to the outer membrane of the cell. This chain is Lipid-A-disaccharide synthase, found in Pseudomonas paraeruginosa (strain DSM 24068 / PA7) (Pseudomonas aeruginosa (strain PA7)).